Here is a 377-residue protein sequence, read N- to C-terminus: Testis-expressed protein 13A (377 aa).

The tract at residues 92-377 is required for repression of transcription; that stretch reads WLQDLSSLHK…CGKGIWLQNP (286 aa). A coiled-coil region spans residues 122–156; sequence QKEVALQLQMAQAKLEEVQRERDLLRLKILQAELR. Residues 142–165 form an LRR repeat; that stretch reads ERDLLRLKILQAELRALPNAVRPA. The segment at 345 to 369 adopts a RanBP2-type zinc-finger fold; sequence RPGDWDCPWCKAVNFSRRENCFHCG. Residues cysteine 351, cysteine 354, cysteine 365, and cysteine 368 each coordinate Zn(2+).

This sequence belongs to the TEX13 family. Interacts with CNOT1; the interaction may inhibit CNOT1 binding to mRNA and subsequently CNOT1-mediated mRNA degradation.

Functionally, binds to ssRNA containing the consensus sequence 5'-AGGUAA-3'. Plays a role in transcriptional repression. Required for rapid sperm motility and timely degradation of mRNA via its interaction with CNOT1. The protein is Testis-expressed protein 13A of Mus musculus (Mouse).